A 274-amino-acid chain; its full sequence is 2,3,4,5-tetrahydropyridine-2,6-dicarboxylate N-succinyltransferase (274 aa).

Arg-106 and Asp-143 together coordinate substrate.

Belongs to the transferase hexapeptide repeat family. As to quaternary structure, homotrimer.

The protein localises to the cytoplasm. It carries out the reaction (S)-2,3,4,5-tetrahydrodipicolinate + succinyl-CoA + H2O = (S)-2-succinylamino-6-oxoheptanedioate + CoA. It functions in the pathway amino-acid biosynthesis; L-lysine biosynthesis via DAP pathway; LL-2,6-diaminopimelate from (S)-tetrahydrodipicolinate (succinylase route): step 1/3. In Rickettsia conorii (strain ATCC VR-613 / Malish 7), this protein is 2,3,4,5-tetrahydropyridine-2,6-dicarboxylate N-succinyltransferase.